The sequence spans 384 residues: MTIEPLNLVRIRRQFHESPELALKEFQTHALLLSVIRSLPQNLLEIKTIPELPTALLVRVAGSHPHRTIGYRADIDALPVNEKTGLDFASKTPGIMHACGHDIHMTVALGILEYFANHQPQDNLIFFFQPAEESHSGSVRAFNANIFTNQFRPNEFYGLHSTPTLPAGVIGCRMGTLFAGTTEVNLKLTGKGGHAAYPQDANDMVVAQAYLITQLQTIVARNVNPIEGGVLTLGKVSAGNVRNVIADQAVIEGTIRGLTQKMILLIQQRVQQICEGTAQAFNCQVEVKMNQGGYLPVENDPTLTHELIQFMQSDSAIKFKKTPPAMTGEDFGFLLSKFPGTMFWLGVGATSSLHSATFNPDERAIQLGIDAVIKFLQNRMSKGA.

Residue Asp74 is part of the active site. The active-site Proton acceptor is Glu133.

This sequence belongs to the peptidase M20A family. N-acetyldiaminopimelate deacetylase subfamily.

The enzyme catalyses N-acetyl-(2S,6S)-2,6-diaminopimelate + H2O = (2S,6S)-2,6-diaminopimelate + acetate. It functions in the pathway amino-acid biosynthesis; L-lysine biosynthesis via DAP pathway; LL-2,6-diaminopimelate from (S)-tetrahydrodipicolinate (acetylase route): step 3/3. Functionally, catalyzes the conversion of N-acetyl-diaminopimelate to diaminopimelate and acetate. The protein is N-acetyldiaminopimelate deacetylase of Pediococcus pentosaceus (strain ATCC 25745 / CCUG 21536 / LMG 10740 / 183-1w).